Consider the following 503-residue polypeptide: Protein-cysteine N-palmitoyltransferase HHAT-like protein (503 aa).

Helical transmembrane passes span 12–31 (LGLY…RGLL), 65–87 (WVMW…VLFA), 100–122 (WMYA…LLLL), 127–149 (MVLY…LASL), 250–272 (AGLS…ILTI), 287–309 (LAGL…FGVV), 426–445 (VRAL…NLVS), and 460–482 (ILTG…VQLV).

It belongs to the membrane-bound acyltransferase family. HHAT subfamily. As to quaternary structure, interacts with SHH.

It is found in the endoplasmic reticulum membrane. Its function is as follows. Negatively regulates N-terminal palmitoylation of SHH by HHAT/SKN. This chain is Protein-cysteine N-palmitoyltransferase HHAT-like protein (Hhatl), found in Mus musculus (Mouse).